A 283-amino-acid polypeptide reads, in one-letter code: 5'-nucleotidase SurE 2 (283 aa).

Aspartate 19, aspartate 20, serine 52, and asparagine 110 together coordinate a divalent metal cation.

Belongs to the SurE nucleotidase family. The cofactor is a divalent metal cation.

The protein resides in the cytoplasm. It catalyses the reaction a ribonucleoside 5'-phosphate + H2O = a ribonucleoside + phosphate. Functionally, nucleotidase that shows phosphatase activity on nucleoside 5'-monophosphates. The chain is 5'-nucleotidase SurE 2 from Chlamydia caviae (strain ATCC VR-813 / DSM 19441 / 03DC25 / GPIC) (Chlamydophila caviae).